Reading from the N-terminus, the 479-residue chain is Heparin cofactor 2 (479 aa).

A signal peptide spans 1 to 23 (MKHPAYTLLLSLIMSMCAGSKGL). An N-linked (GlcNAc...) asparagine glycan is attached at Asn31. A run of 2 repeats spans residues 55 to 65 (GEEDDDYLDLE) and 69 to 79 (SEDDDYIYVVD). A 2 X 11 AA approximate repeats, Asp/Glu-rich (acidic) (hirudin-like) region spans residues 55 to 79 (GEEDDDYLDLEKLLSEDDDYIYVVD). Sulfotyrosine occurs at positions 61 and 74. An N-linked (GlcNAc...) asparagine glycan is attached at Asn168. The tract at residues 172 to 192 (KYEVTTIHNLFRKLTHRLFRR) is glycosaminoglycan-binding site. 2 N-linked (GlcNAc...) asparagine glycosylation sites follow: Asn367 and Asn403.

This sequence belongs to the serpin family. Different composition of the N-linked oligosaccharides appears to yield a 68-kDa and a 72-kDa form.

Its function is as follows. Thrombin inhibitor activated by the glycosaminoglycans, heparin or dermatan sulfate. In the presence of the latter, HC-II becomes the predominant thrombin inhibitor in place of antithrombin III (AT). The polypeptide is Heparin cofactor 2 (Serpind1) (Rattus norvegicus (Rat)).